We begin with the raw amino-acid sequence, 524 residues long: uncharacterized protein (524 aa).

Over residues 83–101 (NSTPSKQAKPLQRNSPYQG) the composition is skewed to polar residues. Disordered regions lie at residues 83–108 (NSTPSKQAKPLQRNSPYQGNSQSENQ) and 155–179 (PPCNIETNEDDSGNNEYNNNKKRPR).

It localises to the cytoplasm. This is an uncharacterized protein from Saccharomyces cerevisiae (strain ATCC 204508 / S288c) (Baker's yeast).